Consider the following 181-residue polypeptide: uncharacterized protein (181 aa).

This is an uncharacterized protein from Homo sapiens (Human).